A 91-amino-acid polypeptide reads, in one-letter code: Essential MCU regulator, mitochondrial (91 aa).

Residues 45-65 (VIPFGLLGVVLTVIPGLLIGA) form a helical membrane-spanning segment.

It belongs to the SMDT1/EMRE family.

The protein resides in the mitochondrion inner membrane. Essential regulatory subunit of the mitochondrial calcium uniporter (mcu) channel, a protein that mediates calcium uptake into mitochondria. The chain is Essential MCU regulator, mitochondrial from Aedes aegypti (Yellowfever mosquito).